Here is a 185-residue protein sequence, read N- to C-terminus: ATP-dependent protease subunit HslV (185 aa).

Residue threonine 12 is part of the active site. The Na(+) site is built by alanine 168, cysteine 171, and threonine 174.

The protein belongs to the peptidase T1B family. HslV subfamily. In terms of assembly, a double ring-shaped homohexamer of HslV is capped on each side by a ring-shaped HslU homohexamer. The assembly of the HslU/HslV complex is dependent on binding of ATP.

The protein resides in the cytoplasm. It carries out the reaction ATP-dependent cleavage of peptide bonds with broad specificity.. Its activity is regulated as follows. Allosterically activated by HslU binding. Its function is as follows. Protease subunit of a proteasome-like degradation complex believed to be a general protein degrading machinery. This is ATP-dependent protease subunit HslV from Cereibacter sphaeroides (strain ATCC 17025 / ATH 2.4.3) (Rhodobacter sphaeroides).